The sequence spans 298 residues: Cobalt-precorrin-5B C(1)-methyltransferase (298 aa).

Belongs to the CbiD family.

The enzyme catalyses Co-precorrin-5B + S-adenosyl-L-methionine = Co-precorrin-6A + S-adenosyl-L-homocysteine. The protein operates within cofactor biosynthesis; adenosylcobalamin biosynthesis; cob(II)yrinate a,c-diamide from sirohydrochlorin (anaerobic route): step 6/10. Functionally, catalyzes the methylation of C-1 in cobalt-precorrin-5B to form cobalt-precorrin-6A. The chain is Cobalt-precorrin-5B C(1)-methyltransferase from Archaeoglobus fulgidus (strain ATCC 49558 / DSM 4304 / JCM 9628 / NBRC 100126 / VC-16).